The sequence spans 570 residues: Proline--tRNA ligase (570 aa).

It belongs to the class-II aminoacyl-tRNA synthetase family. ProS type 1 subfamily. Homodimer.

It is found in the cytoplasm. The catalysed reaction is tRNA(Pro) + L-proline + ATP = L-prolyl-tRNA(Pro) + AMP + diphosphate. Catalyzes the attachment of proline to tRNA(Pro) in a two-step reaction: proline is first activated by ATP to form Pro-AMP and then transferred to the acceptor end of tRNA(Pro). As ProRS can inadvertently accommodate and process non-cognate amino acids such as alanine and cysteine, to avoid such errors it has two additional distinct editing activities against alanine. One activity is designated as 'pretransfer' editing and involves the tRNA(Pro)-independent hydrolysis of activated Ala-AMP. The other activity is designated 'posttransfer' editing and involves deacylation of mischarged Ala-tRNA(Pro). The misacylated Cys-tRNA(Pro) is not edited by ProRS. The sequence is that of Proline--tRNA ligase from Clostridium beijerinckii (strain ATCC 51743 / NCIMB 8052) (Clostridium acetobutylicum).